The chain runs to 301 residues: tRNA dimethylallyltransferase (301 aa).

12–19 (GPTAVGKT) lines the ATP pocket. Residue 14 to 19 (TAVGKT) coordinates substrate. The interaction with substrate tRNA stretch occupies residues 37 to 40 (DSQQ).

It belongs to the IPP transferase family. In terms of assembly, monomer. Requires Mg(2+) as cofactor.

It catalyses the reaction adenosine(37) in tRNA + dimethylallyl diphosphate = N(6)-dimethylallyladenosine(37) in tRNA + diphosphate. Catalyzes the transfer of a dimethylallyl group onto the adenine at position 37 in tRNAs that read codons beginning with uridine, leading to the formation of N6-(dimethylallyl)adenosine (i(6)A). This chain is tRNA dimethylallyltransferase, found in Streptococcus uberis (strain ATCC BAA-854 / 0140J).